Consider the following 76-residue polypeptide: Beta-defensin 121 (76 aa).

A signal peptide spans 1-15; that stretch reads MKLLLLLLTVTLLLA. 3 disulfides stabilise this stretch: cysteine 23–cysteine 50, cysteine 30–cysteine 44, and cysteine 34–cysteine 51.

Belongs to the beta-defensin family.

Its subcellular location is the secreted. Its function is as follows. Has antibacterial activity. In Pan troglodytes (Chimpanzee), this protein is Beta-defensin 121 (DEFB121).